The primary structure comprises 270 residues: Tryptophan synthase alpha chain (270 aa).

Active-site proton acceptor residues include glutamate 49 and aspartate 60.

The protein belongs to the TrpA family. As to quaternary structure, tetramer of two alpha and two beta chains.

It carries out the reaction (1S,2R)-1-C-(indol-3-yl)glycerol 3-phosphate + L-serine = D-glyceraldehyde 3-phosphate + L-tryptophan + H2O. The protein operates within amino-acid biosynthesis; L-tryptophan biosynthesis; L-tryptophan from chorismate: step 5/5. Its function is as follows. The alpha subunit is responsible for the aldol cleavage of indoleglycerol phosphate to indole and glyceraldehyde 3-phosphate. The chain is Tryptophan synthase alpha chain from Pseudomonas syringae pv. tomato (strain ATCC BAA-871 / DC3000).